The following is a 291-amino-acid chain: Pre-mRNA-splicing factor SPP381 (291 aa).

2 disordered regions span residues 1–99 (MSFR…PLPR) and 239–266 (EKEK…YKIT). Polar residues-rich tracts occupy residues 28 to 41 (QNVS…SLSH) and 52 to 62 (TGKNRTPNDGQ). Over residues 63–91 (ESNESDGSPESDESPESEESSDNSDSSDS) the composition is skewed to acidic residues. Over residues 239 to 258 (EKEKLDHKKQRSAEKVEKSH) the composition is skewed to basic and acidic residues.

Belongs to the SPP381 family. Component of the U4/U6-U5 tri-snRNP complex composed of the U4, U6 and U5 snRNAs and at least PRP3, PRP4, PRP6, PRP8, PRP18, PRP31, PRP38, SNU13, SNU23, SNU66, SNU114, SPP381, SMB1, SMD1, SMD2, SMD3, SMX2, SMX3, LSM2, LSM3, LSM4, LSM5, LSM6, LSM7, LSM8, BRR2 and DIB1. Interacts with PRP38.

The protein localises to the nucleus. Its function is as follows. Component of the spliceosome and rRNA processing machinery. In association with the spliceosomal U4/U6.U5 tri-snRNP particle, required for splicing of pre-mRNA. This chain is Pre-mRNA-splicing factor SPP381 (SPP381), found in Saccharomyces cerevisiae (strain ATCC 204508 / S288c) (Baker's yeast).